The following is a 572-amino-acid chain: Urease subunit alpha (572 aa).

Residues 134–572 form the Urease domain; the sequence is AGIDTHIHLI…AAMNQLYFFG (439 aa). Residues H139, H141, and K222 each contribute to the Ni(2+) site. N6-carboxylysine is present on K222. H224 contacts substrate. Positions 251 and 277 each coordinate Ni(2+). The Proton donor role is filled by H325. Position 365 (D365) interacts with Ni(2+).

Belongs to the metallo-dependent hydrolases superfamily. Urease alpha subunit family. In terms of assembly, heterotrimer of UreA (gamma), UreB (beta) and UreC (alpha) subunits. Three heterotrimers associate to form the active enzyme. Ni cation serves as cofactor. In terms of processing, carboxylation allows a single lysine to coordinate two nickel ions.

Its subcellular location is the cytoplasm. The enzyme catalyses urea + 2 H2O + H(+) = hydrogencarbonate + 2 NH4(+). It functions in the pathway nitrogen metabolism; urea degradation; CO(2) and NH(3) from urea (urease route): step 1/1. The sequence is that of Urease subunit alpha from Edwardsiella ictaluri (strain 93-146).